The following is a 470-amino-acid chain: Trigger factor (470 aa).

Positions 164 to 243 (GDYVVIDMTA…VTAVKVQELP (80 aa)) constitute a PPIase FKBP-type domain. Composition is skewed to acidic residues over residues 424-438 (ETDA…ESVE) and 445-470 (AEDD…AAKA). Positions 424 to 470 (ETDAEDAAEGVESVEVDLSAAAEDDAEETSDEPAAEDTATEDEAAKA) are disordered.

This sequence belongs to the FKBP-type PPIase family. Tig subfamily.

The protein resides in the cytoplasm. The enzyme catalyses [protein]-peptidylproline (omega=180) = [protein]-peptidylproline (omega=0). Functionally, involved in protein export. Acts as a chaperone by maintaining the newly synthesized protein in an open conformation. Functions as a peptidyl-prolyl cis-trans isomerase. The chain is Trigger factor from Beutenbergia cavernae (strain ATCC BAA-8 / DSM 12333 / CCUG 43141 / JCM 11478 / NBRC 16432 / NCIMB 13614 / HKI 0122).